A 751-amino-acid chain; its full sequence is Probable alpha-galactosidase C (751 aa).

An N-terminal signal peptide occupies residues 1–27 (MFGSPKRAALAAASLLAIFGNGPSVMA). Asn49, Asn57, Asn162, Asn186, Asn194, Asn366, Asn433, Asn452, and Asn500 each carry an N-linked (GlcNAc...) asparagine glycan. Residue Asp510 is the Nucleophile of the active site. Asp572 serves as the catalytic Proton donor. Asn720 is a glycosylation site (N-linked (GlcNAc...) asparagine).

It belongs to the glycosyl hydrolase 36 family. As to quaternary structure, homotetramer. The cofactor is Mg(2+). Requires NAD(+) as cofactor.

The protein localises to the secreted. The catalysed reaction is Hydrolysis of terminal, non-reducing alpha-D-galactose residues in alpha-D-galactosides, including galactose oligosaccharides, galactomannans and galactolipids.. In terms of biological role, hydrolyzes a variety of simple alpha-D-galactoside as well as more complex molecules such as oligosaccharides and polysaccharides. The polypeptide is Probable alpha-galactosidase C (aglC) (Aspergillus flavus (strain ATCC 200026 / FGSC A1120 / IAM 13836 / NRRL 3357 / JCM 12722 / SRRC 167)).